We begin with the raw amino-acid sequence, 343 residues long: Heat-inducible transcription repressor HrcA (343 aa).

The protein belongs to the HrcA family.

Negative regulator of class I heat shock genes (grpE-dnaK-dnaJ and groELS operons). Prevents heat-shock induction of these operons. The sequence is that of Heat-inducible transcription repressor HrcA from Mycobacterium marinum (strain ATCC BAA-535 / M).